The sequence spans 470 residues: Auxin transporter-like protein 3 (470 aa).

The Cytoplasmic segment spans residues 1 to 57; that stretch reads MAAEKIETVVAGNYLEMEREEENISGNKKSSTKTKLSNFFWHGGSVYDAWFSCASNQ. A helical transmembrane segment spans residues 58 to 75; the sequence is VAQVLLTLPYSFSQLGMM. Residues 76–77 lie on the Extracellular side of the membrane; sequence SG. Residues 78–98 traverse the membrane as a helical segment; it reads ILFQLFYGLMGSWTAYLISVL. The Cytoplasmic segment spans residues 99-134; that stretch reads YVEYRTRKEREKFDFRNHVIQWFEVLDGLLGKHWRN. A helical transmembrane segment spans residues 135-155; that stretch reads LGLIFNCTFLLFGSVIQLIAC. The Extracellular portion of the chain corresponds to 156–170; sequence ASNIYYINDKLDKRT. Residues 171–191 traverse the membrane as a helical segment; sequence WTYIFGACCATTVFIPSFHNY. Arg-192 is a topological domain (cytoplasmic). A helical transmembrane segment spans residues 193–213; that stretch reads IWSFLGLAMTTYTSWYLTIAS. Topologically, residues 214–230 are extracellular; it reads LLHGQAEDVKHSGPTTM. The chain crosses the membrane as a helical span at residues 231–251; that stretch reads VLYFTGATNILYTFGGHAVTV. The Cytoplasmic segment spans residues 252-264; that stretch reads EIMHAMWKPQKFK. A helical transmembrane segment spans residues 265 to 285; it reads AIYLLATIYVLTLTLPSASAV. The Extracellular portion of the chain corresponds to 286–312; that stretch reads YWAFGDKLLTHSNALSLLPKTGFRDTA. The helical transmembrane segment at 313-333 threads the bilayer; that stretch reads VILMLIHQFITFGFASTPLYF. Residues 334–354 are Cytoplasmic-facing; sequence VWEKLIGVHETKSMFKRAMAR. A helical transmembrane segment spans residues 355 to 375; that stretch reads LPVVVPIWFLAIIFPFFGPIN. A topological domain (extracellular) is located at residue Ser-376. Residues 377-397 traverse the membrane as a helical segment; the sequence is AVGSLLVSFTVYIIPALAHML. Over 398–426 the chain is Cytoplasmic; sequence TFAPAPSRENAVERPPRVVGGWMGTYCIN. Residues 427–447 traverse the membrane as a helical segment; it reads IFVVVWVFVVGFGFGGWASMV. The Extracellular portion of the chain corresponds to 448 to 470; that stretch reads NFVRQIDTFGLFTKCYQCPPHKP.

It belongs to the amino acid/polyamine transporter 2 family. Amino acid/auxin permease (AAAP) (TC 2.A.18.1) subfamily.

The protein localises to the cell membrane. In terms of biological role, carrier protein involved in proton-driven auxin influx. Mediates the formation of auxin gradient from developing leaves (site of auxin biosynthesis) to tips by contributing to the loading of auxin in vascular tissues and facilitating acropetal (base to tip) auxin transport within inner tissues of the root apex, and basipetal (tip to base) auxin transport within outer tissues of the root apex. The polypeptide is Auxin transporter-like protein 3 (LAX3) (Arabidopsis thaliana (Mouse-ear cress)).